A 649-amino-acid polypeptide reads, in one-letter code: Mitochondrial Rho GTPase 1 (649 aa).

The Cytoplasmic portion of the chain corresponds to 1–623; sequence MTKETIRVVI…KPTNIDYSSA (623 aa). One can recognise a Miro 1 domain in the interval 3-176; it reads KETIRVVICG…FYLCQRSISY (174 aa). Residues 12-19, 61-63, and 115-118 contribute to the GTP site; these read GDDGVGKT, DTD, and NKCD. 2 consecutive EF-hand domains span residues 192 to 227 and 320 to 355; these read SAVA…CFGK and KGYR…TPGL. 8 residues coordinate Ca(2+): Asp205, Asp207, Asp209, Glu216, Asp333, Asp335, Asp337, and Glu344. Residues 436–601 form the Miro 2 domain; that stretch reads RKVFNCFVVG…FKKIIQASLE (166 aa). GTP-binding positions include 445-452, 481-485, and 550-553; these read GKRNSGKS, EVTGD, and LKAD. A helical; Anchor for type IV membrane protein transmembrane segment spans residues 624–644; it reads VILGSSIGFLALFSYTMIKLL. At 645–649 the chain is on the mitochondrial intermembrane side; sequence KPTQQ.

The protein belongs to the mitochondrial Rho GTPase family.

It localises to the mitochondrion outer membrane. Mitochondrial GTPase involved in mitochondrial trafficking. Probably involved in control of anterograde transport of mitochondria and their subcellular distribution. This chain is Mitochondrial Rho GTPase 1 (GEM1), found in Candida glabrata (strain ATCC 2001 / BCRC 20586 / JCM 3761 / NBRC 0622 / NRRL Y-65 / CBS 138) (Yeast).